The following is a 1063-amino-acid chain: Valine--tRNA ligase, mitochondrial (1063 aa).

The N-terminal 26 residues, Met-1–His-26, are a transit peptide targeting the mitochondrion. Positions Phe-25 to Glu-53 are disordered. The span at Arg-42 to Glu-53 shows a compositional bias: basic and acidic residues. Positions Pro-146–His-156 match the 'HIGH' region motif. The short motif at Lys-658–Ser-662 is the 'KMSKS' region element. Lys-661 contacts ATP.

The protein belongs to the class-I aminoacyl-tRNA synthetase family.

It is found in the mitochondrion. It catalyses the reaction tRNA(Val) + L-valine + ATP = L-valyl-tRNA(Val) + AMP + diphosphate. Its function is as follows. Catalyzes the attachment of valine to tRNA(Val) in a two-step reaction: valine is first activated by ATP to form Val-AMP and then transferred to the acceptor end of tRNA(Val). This Homo sapiens (Human) protein is Valine--tRNA ligase, mitochondrial (VARS2).